An 800-amino-acid chain; its full sequence is Fibroblast growth factor receptor 3 (800 aa).

Positions 1–20 (MVPLCLLLYLATLVFPPVYS) are cleaved as a signal peptide. The 102-residue stretch at 21–122 (AHLLSPEPTD…YTVKVIDSLS (102 aa)) folds into the Ig-like C2-type 1 domain. Over 21–363 (AHLLSPEPTD…EMEREDDYAD (343 aa)) the chain is Extracellular. The cysteines at positions 55 and 101 are disulfide-linked. N-linked (GlcNAc...) asparagine glycans are attached at residues Asn-77, Asn-90, and Asn-112. Over residues 124-136 (GDDEDYDEDEDEA) the composition is skewed to acidic residues. Residues 124–143 (GDDEDYDEDEDEAGNGNAEA) form a disordered region. Ig-like C2-type domains are found at residues 144–237 (PYWT…YQLD) and 246–348 (PILQ…AWLT). Residues Cys-169 and Cys-221 are joined by a disulfide bond. Asn-218, Asn-255, Asn-287, Asn-308, and Asn-321 each carry an N-linked (GlcNAc...) asparagine glycan. A disulfide bridge connects residues Cys-268 and Cys-332. The chain crosses the membrane as a helical span at residues 364-384 (ILIYVTSCVLFILTMVIIILC). The Cytoplasmic segment spans residues 385–800 (RMWINTQKTL…HHHSNGVIRT (416 aa)). Residues 460–739 (LTLGKPLGEG…RQLVEDHDRV (280 aa)) form the Protein kinase domain. ATP contacts are provided by residues 466–474 (LGEGCFGQV) and Lys-496. The active-site Proton acceptor is the Asp-605. Phosphotyrosine; by autocatalysis occurs at positions 635, 636, 712, and 748. Over residues 764-773 (DSNSTCSSGD) the composition is skewed to polar residues. The segment at 764-800 (DSNSTCSSGDDSVFAHDPLPEEPCLPKHHHSNGVIRT) is disordered.

The protein belongs to the protein kinase superfamily. Tyr protein kinase family. Fibroblast growth factor receptor subfamily. In terms of assembly, monomer. Homodimer after ligand binding. Post-translationally, autophosphorylated. Binding of FGF family members together with heparan sulfate proteoglycan or heparin promotes receptor dimerization and autophosphorylation on tyrosine residues. Autophosphorylation occurs in trans between the two FGFR molecules present in the dimer.

It localises to the cell membrane. The enzyme catalyses L-tyrosyl-[protein] + ATP = O-phospho-L-tyrosyl-[protein] + ADP + H(+). Its activity is regulated as follows. Present in an inactive conformation in the absence of bound ligand. Ligand binding leads to dimerization and activation by autophosphorylation on tyrosine residues. Tyrosine-protein kinase that acts as a cell-surface receptor for fibroblast growth factors and plays an essential role in the regulation of cell proliferation, differentiation and apoptosis. Plays an essential role in the regulation of chondrocyte differentiation, proliferation and apoptosis, and is required for normal skeleton development. Regulates both osteogenesis and postnatal bone mineralization by osteoblasts. Promotes apoptosis in chondrocytes, but can also promote cancer cell proliferation. Phosphorylates PLCG1, CBL and FRS2. Ligand binding leads to the activation of several signaling cascades. Activation of PLCG1 leads to the production of the cellular signaling molecules diacylglycerol and inositol 1,4,5-trisphosphate. Phosphorylation of FRS2 triggers recruitment of GRB2, GAB1, PIK3R1 and SOS1, and mediates activation of RAS, MAPK1/ERK2, MAPK3/ERK1 and the MAP kinase signaling pathway, as well as of the AKT1 signaling pathway. This Danio rerio (Zebrafish) protein is Fibroblast growth factor receptor 3 (fgfr3).